The sequence spans 372 residues: Fatty acid 2-hydroxylase (372 aa).

Positions 8 to 86 (AASFTPAEVQ…LEQYYVGELR (79 aa)) constitute a Cytochrome b5 heme-binding domain. Histidine 43 and histidine 69 together coordinate heme. Transmembrane regions (helical) follow at residues 168-188 (VWYS…WSYY) and 213-233 (SVFI…EYVI). The region spanning 219 to 361 (FVLGMLFWTF…TKLWDYFFHT (143 aa)) is the Fatty acid hydroxylase domain. The Zn(2+) site is built by histidine 234, histidine 239, histidine 257, histidine 260, and histidine 261. Transmembrane regions (helical) follow at residues 268 to 288 (SRLV…YVFL) and 290 to 310 (LILP…GYVL). Residues histidine 315, histidine 319, histidine 336, histidine 339, and histidine 340 each coordinate Zn(2+).

Belongs to the sterol desaturase family. SCS7 subfamily. Requires Zn(2+) as cofactor. Expressed in brain (at protein level). Detected in cerebellum and forebrain. Expression in the white matter is mainly restricted in oligodendrocytes. Expressed in stomach, kidney, skin and testis. Expressed in sebaceous gland.

The protein resides in the endoplasmic reticulum membrane. It is found in the microsome membrane. It carries out the reaction a 1,2-saturated fatty acid + 2 Fe(II)-[cytochrome b5] + O2 + 2 H(+) = a (R)-2-hydroxy fatty acid + 2 Fe(III)-[cytochrome b5] + H2O. The enzyme catalyses hexadecanoate + 2 Fe(II)-[cytochrome b5] + O2 + 2 H(+) = (R)-2-hydroxyhexadecanoate + 2 Fe(III)-[cytochrome b5] + H2O. It catalyses the reaction octadecanoate + 2 Fe(II)-[cytochrome b5] + O2 + 2 H(+) = (R)-2-hydroxyoctadecanoate + 2 Fe(III)-[cytochrome b5] + H2O. The catalysed reaction is docosanoate + 2 Fe(II)-[cytochrome b5] + O2 + 2 H(+) = 2-hydroxydocosanoate + 2 Fe(III)-[cytochrome b5] + H2O. It carries out the reaction tetracosanoate + 2 Fe(II)-[cytochrome b5] + O2 + 2 H(+) = (R)-2-hydroxytetracosanoate + 2 Fe(III)-[cytochrome b5] + H2O. It participates in sphingolipid metabolism; galactosylceramide biosynthesis. The protein operates within lipid metabolism; fatty acid metabolism. Functionally, catalyzes the hydroxylation of free fatty acids at the C-2 position to produce 2-hydroxy fatty acids, which are building blocks of sphingolipids and glycosphingolipids common in neural tissue and epidermis. FA2H is stereospecific for the production of (R)-2-hydroxy fatty acids. Plays an essential role in the synthesis of galactosphingolipids of the myelin sheath. Responsible for the synthesis of sphingolipids and glycosphingolipids involved in the formation of epidermal lamellar bodies critical for skin permeability barrier. Participates in the synthesis of glycosphingolipids and a fraction of type II wax diesters in sebaceous gland, specifically regulating hair follicle homeostasis. Involved in the synthesis of sphingolipids of plasma membrane rafts, controlling lipid raft mobility and trafficking of raft-associated proteins. This Mus musculus (Mouse) protein is Fatty acid 2-hydroxylase.